Here is a 471-residue protein sequence, read N- to C-terminus: tRNA-2-methylthio-N(6)-dimethylallyladenosine synthase (471 aa).

Residues 31–149 (LYYHIETYGC…FPQLLWEALN (119 aa)) form the MTTase N-terminal domain. Cys40, Cys76, Cys110, Cys186, Cys190, and Cys193 together coordinate [4Fe-4S] cluster. One can recognise a Radical SAM core domain in the interval 172–402 (RDSNLKAWVN…IELQNKISLE (231 aa)). The TRAM domain maps to 405–468 (AELRGKIVEV…AWTMQGELVE (64 aa)).

It belongs to the methylthiotransferase family. MiaB subfamily. Monomer. It depends on [4Fe-4S] cluster as a cofactor.

The protein localises to the cytoplasm. The catalysed reaction is N(6)-dimethylallyladenosine(37) in tRNA + (sulfur carrier)-SH + AH2 + 2 S-adenosyl-L-methionine = 2-methylsulfanyl-N(6)-dimethylallyladenosine(37) in tRNA + (sulfur carrier)-H + 5'-deoxyadenosine + L-methionine + A + S-adenosyl-L-homocysteine + 2 H(+). Its function is as follows. Catalyzes the methylthiolation of N6-(dimethylallyl)adenosine (i(6)A), leading to the formation of 2-methylthio-N6-(dimethylallyl)adenosine (ms(2)i(6)A) at position 37 in tRNAs that read codons beginning with uridine. The protein is tRNA-2-methylthio-N(6)-dimethylallyladenosine synthase of Thermoanaerobacter sp. (strain X514).